A 161-amino-acid polypeptide reads, in one-letter code: Endoribonuclease YbeY (161 aa).

Zn(2+) contacts are provided by His-121, His-125, and His-131.

This sequence belongs to the endoribonuclease YbeY family. It depends on Zn(2+) as a cofactor.

The protein localises to the cytoplasm. Its function is as follows. Single strand-specific metallo-endoribonuclease involved in late-stage 70S ribosome quality control and in maturation of the 3' terminus of the 16S rRNA. The polypeptide is Endoribonuclease YbeY (Xylella fastidiosa (strain 9a5c)).